Reading from the N-terminus, the 542-residue chain is CTP synthase (542 aa).

The amidoligase domain stretch occupies residues 1-266; that stretch reads MATNYIFVTG…DEFVCNRFHL (266 aa). Ser14 is a binding site for CTP. A UTP-binding site is contributed by Ser14. Residues 15–20 and Asp72 contribute to the ATP site; that span reads SLGKGI. Asp72 and Glu140 together coordinate Mg(2+). Residues 147–149, 187–192, and Lys223 each bind CTP; these read DIE and KTKPTQ. Residues 187 to 192 and Lys223 contribute to the UTP site; that span reads KTKPTQ. Residue 239–241 coordinates ATP; the sequence is KDV. Positions 291-542 constitute a Glutamine amidotransferase type-1 domain; sequence TIGMVGKYVE…VKAAKENQKK (252 aa). Gly352 is a binding site for L-glutamine. The Nucleophile; for glutamine hydrolysis role is filled by Cys379. L-glutamine contacts are provided by residues 380-383, Glu403, and Arg470; that span reads LGMQ. Active-site residues include His515 and Glu517.

It belongs to the CTP synthase family. In terms of assembly, homotetramer.

The enzyme catalyses UTP + L-glutamine + ATP + H2O = CTP + L-glutamate + ADP + phosphate + 2 H(+). It catalyses the reaction L-glutamine + H2O = L-glutamate + NH4(+). It carries out the reaction UTP + NH4(+) + ATP = CTP + ADP + phosphate + 2 H(+). It participates in pyrimidine metabolism; CTP biosynthesis via de novo pathway; CTP from UDP: step 2/2. With respect to regulation, allosterically activated by GTP, when glutamine is the substrate; GTP has no effect on the reaction when ammonia is the substrate. The allosteric effector GTP functions by stabilizing the protein conformation that binds the tetrahedral intermediate(s) formed during glutamine hydrolysis. Inhibited by the product CTP, via allosteric rather than competitive inhibition. Functionally, catalyzes the ATP-dependent amination of UTP to CTP with either L-glutamine or ammonia as the source of nitrogen. Regulates intracellular CTP levels through interactions with the four ribonucleotide triphosphates. The sequence is that of CTP synthase from Actinobacillus succinogenes (strain ATCC 55618 / DSM 22257 / CCUG 43843 / 130Z).